The following is a 570-amino-acid chain: A-type ATP synthase subunit A (570 aa).

223–230 contacts ATP; the sequence is GPFGSGKT.

Belongs to the ATPase alpha/beta chains family. As to quaternary structure, has multiple subunits with at least A(3), B(3), C, D, E, F, H, I and proteolipid K(x).

Its subcellular location is the cell membrane. The enzyme catalyses ATP + H2O + 4 H(+)(in) = ADP + phosphate + 5 H(+)(out). Component of the A-type ATP synthase that produces ATP from ADP in the presence of a proton gradient across the membrane. The A chain is the catalytic subunit. This is A-type ATP synthase subunit A from Nanoarchaeum equitans (strain Kin4-M).